We begin with the raw amino-acid sequence, 242 residues long: Biosynthetic peptidoglycan transglycosylase (242 aa).

The chain crosses the membrane as a helical span at residues 19-39 (ILAALAVFWGGGIALFSVVPV).

It belongs to the glycosyltransferase 51 family.

Its subcellular location is the cell inner membrane. The enzyme catalyses [GlcNAc-(1-&gt;4)-Mur2Ac(oyl-L-Ala-gamma-D-Glu-L-Lys-D-Ala-D-Ala)](n)-di-trans,octa-cis-undecaprenyl diphosphate + beta-D-GlcNAc-(1-&gt;4)-Mur2Ac(oyl-L-Ala-gamma-D-Glu-L-Lys-D-Ala-D-Ala)-di-trans,octa-cis-undecaprenyl diphosphate = [GlcNAc-(1-&gt;4)-Mur2Ac(oyl-L-Ala-gamma-D-Glu-L-Lys-D-Ala-D-Ala)](n+1)-di-trans,octa-cis-undecaprenyl diphosphate + di-trans,octa-cis-undecaprenyl diphosphate + H(+). It functions in the pathway cell wall biogenesis; peptidoglycan biosynthesis. Its function is as follows. Peptidoglycan polymerase that catalyzes glycan chain elongation from lipid-linked precursors. This is Biosynthetic peptidoglycan transglycosylase from Salmonella newport (strain SL254).